A 154-amino-acid polypeptide reads, in one-letter code: Transcription antitermination protein NusB (154 aa).

Belongs to the NusB family.

Functionally, involved in transcription antitermination. Required for transcription of ribosomal RNA (rRNA) genes. Binds specifically to the boxA antiterminator sequence of the ribosomal RNA (rrn) operons. The sequence is that of Transcription antitermination protein NusB from Rickettsia typhi (strain ATCC VR-144 / Wilmington).